The primary structure comprises 392 residues: NAC domain-containing protein 58 (392 aa).

The region spanning Leu-9–Lys-173 is the NAC domain. The tract at residues Ser-317–Gln-345 is disordered.

Expressed in leaves, nodes, internodes and mature seeds. Highly expressed in roots. Expressed in leaf sheaths, flag leaves and inflorescences. Expressed in primary and lateral roots, particularly in the vascular tissues. Expressed in the primary phloem of the culm and leaf sheaths. Expressed principally in the primary phloem and in the peripheral zone of the leaf vascular bundles. Expressed in the floral tissues.

It is found in the nucleus. Transcription factor that acts as a positive regulator of the jasmonate (JA) pathway to mediate leaf senescence. May directly regulate LOX2, AOC, AOS2, AOC1 and OPR7, which are genes involved in the biosynthesis of JA. Regulates positively leaf senescence by directly targeting senescence-associated genes (SAGs) related to chlorophyll degradation, nutrient transport and other genes associated with abscisic acid-induced leaf senescence. Transcription activator that plays a role in mediating abiotic stress responses through the abscisic acid (ABA) pathway. Possesses transcriptional activator activity in yeast. The chain is NAC domain-containing protein 58 from Oryza sativa subsp. japonica (Rice).